The chain runs to 222 residues: Glutathione S-transferase U21 (222 aa).

The GST N-terminal domain occupies 3-83 (AEVILLGFWP…YIDEVWSDNN (81 aa)). Glutathione contacts are provided by residues 13-14 (SM), 40-41 (NK), 54-55 (TI), and 67-68 (ES). The GST C-terminal domain occupies 89–211 (DPYHRAQALF…LPDSEKVVGY (123 aa)).

The protein belongs to the GST superfamily. Tau family.

It localises to the cytoplasm. It is found in the cytosol. It catalyses the reaction RX + glutathione = an S-substituted glutathione + a halide anion + H(+). In terms of biological role, may be involved in the conjugation of reduced glutathione to a wide number of exogenous and endogenous hydrophobic electrophiles and have a detoxification role against certain herbicides. The polypeptide is Glutathione S-transferase U21 (GSTU21) (Arabidopsis thaliana (Mouse-ear cress)).